A 181-amino-acid polypeptide reads, in one-letter code: Adenine phosphoribosyltransferase (181 aa).

The protein belongs to the purine/pyrimidine phosphoribosyltransferase family. Homodimer.

The protein localises to the cytoplasm. The enzyme catalyses AMP + diphosphate = 5-phospho-alpha-D-ribose 1-diphosphate + adenine. The protein operates within purine metabolism; AMP biosynthesis via salvage pathway; AMP from adenine: step 1/1. Functionally, catalyzes a salvage reaction resulting in the formation of AMP, that is energically less costly than de novo synthesis. The protein is Adenine phosphoribosyltransferase of Brucella suis (strain ATCC 23445 / NCTC 10510).